A 612-amino-acid polypeptide reads, in one-letter code: Breast cancer type 1 susceptibility protein homolog (612 aa).

The RING-type zinc finger occupies cysteine 21–arginine 61. Residues arginine 140–glutamate 173 form a disordered region. BRCT domains follow at residues arginine 415–isoleucine 477 and glutamate 505–alanine 603.

Heterodimer (via RING-type zinc finger) with brd-1 to form the core CeBCD complex. Brc-1-brd-1 heterodimer-containing CeBCD complexes bound to chromatin are activated as an E3-ubiquitin ligase in response to DNA damage. The heterodimer interacts with the recombinase rad-51 following ionizing irradiation; the interaction is direct. The heterodimer interacts the E2-ubiquitin-conjugating enzyme let-70 following ionizing irradiation. The heterodimer interacts with the pro-crossover proteins msh-5 and syp-3. Phosphorylation of CeBCD complexes is required for E3 ubiquitin-protein ligase activity.

The protein resides in the nucleus. It localises to the chromosome. The protein localises to the cytoplasm. It carries out the reaction S-ubiquitinyl-[E2 ubiquitin-conjugating enzyme]-L-cysteine + [acceptor protein]-L-lysine = [E2 ubiquitin-conjugating enzyme]-L-cysteine + N(6)-ubiquitinyl-[acceptor protein]-L-lysine.. It functions in the pathway protein modification; protein ubiquitination. E3 ubiquitin-protein ligase activity of CeBCD complexes occurs at DNA damage sites. Following DNA damage, E3 ubiquitin-protein ligase activity is reduced by caffeine treatment (inhibitor of ATM and ATK kinase activity). In terms of biological role, E3 ubiquitin-protein ligase that specifically mediates the formation of polyubiquitin chains and plays a central role in DNA repair. Plays a role in triggering cellular responses at damage sites in response to DNA damage that may be induced by UV and ionizing radiation for example. Functions in double-strand break repair, and is required for homologous recombination between sister chromatids in meiotic and mitotic cells. In particular, protects against chromosome non-disjunction and nuclear fragmentation during meiotic double-strand break repair to ensure sister chromatid recombination and aid chromosome stability. Required for normal cell cycle progression. Along with brap-2 modulates the expression of cell cycle arrest protein cki-1 in response to increased levels of reactive oxygen species. Constituent of the CeBCD complex that possesses E3 ubiquitin-protein ligase activity. When bound to chromatin, the brc-1-brd-1 heterodimer within the CeBCD complex is inactive during normal conditions, but in response to DNA damage, the brc-1-brd-1 heterodimer associates with other proteins such as the recombinase rad-51 or the E2-ubiquitin-conjugating enzyme let-70, which activate the CeBCD complex as an E3-ubiquitin ligase. Moreover, association between the brc-1-brd-1 heterodimer and rad-51 and let-70, probably requires DNA checkpoint proteins such as atl-1 and mre-11 in order to induce ubiquitination at DNA damage sites. To this end, the brc-1-brd-1 heterodimer coordinates a diverse range of cellular pathways such as DNA damage repair, ubiquitination and transcriptional regulation to maintain genomic stability. The chain is Breast cancer type 1 susceptibility protein homolog from Caenorhabditis elegans.